The chain runs to 375 residues: MTGNTAPSQADARRTVISVDAMGGDAGPAVVVAGIAKSASKNPDIGFLLHGPAEELEPLVARRKTLKGRVEIRDARDVVTMEDKPSQVMRNGKGTSMWSALESVRSGEADGVVSCGNTGALMALSMLRLRKLPGVNRPAIAILWPSRNPQGFNVMLDVGADVRADAEDLLQYALMGTSYIRNSMDLPCPRVGLLNVGTEEHKGRAELKEAYALISQNAEKANFEFVGFVEGSDIPGDIADVIVTDGFTGNVAIKTGEGTASLLRSAIREAFEYSILSRLAALLAYTSLSRLAKRIDPRRVNGGVFLGLNGTVVKSHGGADATGVSAAVKLAFLLAEQGFAEKLAARVASAVELAQDDATSADADAPGDSETGSTN.

Residues 354-375 (AQDDATSADADAPGDSETGSTN) are disordered. A compositionally biased stretch (low complexity) spans 356 to 368 (DDATSADADAPGD).

It belongs to the PlsX family. As to quaternary structure, homodimer. Probably interacts with PlsY.

It localises to the cytoplasm. The catalysed reaction is a fatty acyl-[ACP] + phosphate = an acyl phosphate + holo-[ACP]. It participates in lipid metabolism; phospholipid metabolism. Functionally, catalyzes the reversible formation of acyl-phosphate (acyl-PO(4)) from acyl-[acyl-carrier-protein] (acyl-ACP). This enzyme utilizes acyl-ACP as fatty acyl donor, but not acyl-CoA. The protein is Phosphate acyltransferase of Ruegeria sp. (strain TM1040) (Silicibacter sp.).